We begin with the raw amino-acid sequence, 216 residues long: Dimethylamine corrinoid protein 1 (216 aa).

In terms of domain architecture, B12-binding N-terminal spans 1–91 (MTSKEELLQE…DMPAGTETKK (91 aa)). Positions 92–216 (LGVIVNGTVE…AKAKELLVGK (125 aa)) constitute a B12-binding domain. His105 lines the methylcob(III)alamin pocket.

Belongs to the methylamine corrinoid protein family.

Its pathway is one-carbon metabolism; methanogenesis from dimethylamine. Functionally, acts as a methyl group carrier between MtbB and MtbA. The chain is Dimethylamine corrinoid protein 1 (mtbC1) from Methanosarcina mazei (strain ATCC BAA-159 / DSM 3647 / Goe1 / Go1 / JCM 11833 / OCM 88) (Methanosarcina frisia).